Reading from the N-terminus, the 599-residue chain is Peptidyl-Asp metalloendopeptidase (599 aa).

A signal peptide spans 1-20 (MKKSLLCSTLALAVASAAQA). His-164 serves as a coordination point for Zn(2+). Glu-165 is an active-site residue. Zn(2+) contacts are provided by His-168 and His-174. Residues 265–285 (PTKVPGTVNPGSGGDTPTPPD) form a disordered region. The CBM-cenC domain occupies 458–583 (YDFESGIGGW…KRAELMILSG (126 aa)).

This sequence belongs to the peptidase M72 family. As to quaternary structure, interacts with BamI, the product of its coregulated adjacent gene, which inhibits its protease activity. It depends on Zn(2+) as a cofactor. In terms of processing, made as a membrane-associated pre-pro-protein, which is exported to the periplasm with removal of the signal peptide, leading to a protein with a molecular mass of 65 kDa, that likely contains the metzincin domain plus tandem carbohydrate-binding domains. Undergoes processing during export to the extracellular milieu, probably by autocatalysis, yielding a (mature length) 25 kDa protein that most likely corresponds to the metzincin domain only.

The protein resides in the secreted. The enzyme catalyses Cleavage of Xaa-|-Asp, Xaa-|-Glu and Xaa-|-cysteic acid bonds.. Is inhibited by BamI, the product of its coregulated adjacent gene. In terms of biological role, metalloprotease with endopeptidase activity. Specifically cleaves on the N-terminal side of aspartyl, glutamyl and cysteic acid residues. Mep72 appears to be a secreted biofilm-specific regulator that affects the processing of a very specific subset of virulence factors exported by the type III secretion machinery as well as flagellar proteins. Binds directly to ExoS and PcrV and affects the processing of these proteins in the biofilm secretome, but contrary to expectation, Mep72 seems to protect these targets against proteolytic processing/degradation. The sequence is that of Peptidyl-Asp metalloendopeptidase from Pseudomonas aeruginosa (strain ATCC 15692 / DSM 22644 / CIP 104116 / JCM 14847 / LMG 12228 / 1C / PRS 101 / PAO1).